The primary structure comprises 100 residues: Colipase-like protein 2 (100 aa).

A signal peptide spans 1–21 (MAAALALVAGVLSGAVLPLWS). 5 disulfide bridges follow: C34-C45, C40-C56, C44-C78, C66-C86, and C80-C97.

It belongs to the colipase family.

The protein localises to the secreted. The sequence is that of Colipase-like protein 2 (CLPSL2) from Homo sapiens (Human).